We begin with the raw amino-acid sequence, 123 residues long: Large ribosomal subunit protein bL12 (123 aa).

The protein belongs to the bacterial ribosomal protein bL12 family. Homodimer. Part of the ribosomal stalk of the 50S ribosomal subunit. Forms a multimeric L10(L12)X complex, where L10 forms an elongated spine to which 2 to 4 L12 dimers bind in a sequential fashion. Binds GTP-bound translation factors.

Forms part of the ribosomal stalk which helps the ribosome interact with GTP-bound translation factors. Is thus essential for accurate translation. This is Large ribosomal subunit protein bL12 from Albidiferax ferrireducens (strain ATCC BAA-621 / DSM 15236 / T118) (Rhodoferax ferrireducens).